The sequence spans 367 residues: Carbohydrate sulfotransferase 14 (367 aa).

Topologically, residues 1 to 34 are cytoplasmic; the sequence is MPPRKKEYGIKRASGSLVHFRAPVSATTIRRHSA. Residues 35 to 55 form a helical; Signal-anchor for type II membrane protein membrane-spanning segment; it reads VVPSVLTFAVIVASGGLLLMI. Residues 56–367 are Lumenal-facing; that stretch reads EKGMLNSVQT…PNTTTEYCRH (312 aa). An N-linked (GlcNAc...) asparagine glycan is attached at Asn99. Residues 144–150 and 202–210 each bind 3'-phosphoadenylyl sulfate; these read PKVACSN and REPMARLLS. A glycan (N-linked (GlcNAc...) asparagine) is linked at Asn359.

Belongs to the sulfotransferase 2 family.

It is found in the golgi apparatus membrane. In terms of biological role, catalyzes the transfer of sulfate to position 4 of the N-acetylgalactosamine (GalNAc) residue of dermatan sulfate. The sequence is that of Carbohydrate sulfotransferase 14 (chst14) from Danio rerio (Zebrafish).